The primary structure comprises 152 residues: UPF0178 protein Plav_1521 (152 aa).

Residues 114–152 form a disordered region; it reads LRETGQSKGGGPAFSKEDRSRFLRSLEDTVQAIRRRPPP. The segment covering 128-140 has biased composition (basic and acidic residues); that stretch reads SKEDRSRFLRSLE.

It belongs to the UPF0178 family.

The chain is UPF0178 protein Plav_1521 from Parvibaculum lavamentivorans (strain DS-1 / DSM 13023 / NCIMB 13966).